The sequence spans 178 residues: Protein GrpE (178 aa).

Belongs to the GrpE family. Homodimer.

Its subcellular location is the cytoplasm. In terms of biological role, participates actively in the response to hyperosmotic and heat shock by preventing the aggregation of stress-denatured proteins, in association with DnaK and GrpE. It is the nucleotide exchange factor for DnaK and may function as a thermosensor. Unfolded proteins bind initially to DnaJ; upon interaction with the DnaJ-bound protein, DnaK hydrolyzes its bound ATP, resulting in the formation of a stable complex. GrpE releases ADP from DnaK; ATP binding to DnaK triggers the release of the substrate protein, thus completing the reaction cycle. Several rounds of ATP-dependent interactions between DnaJ, DnaK and GrpE are required for fully efficient folding. This Rickettsia typhi (strain ATCC VR-144 / Wilmington) protein is Protein GrpE.